The primary structure comprises 324 residues: Delta-aminolevulinic acid dehydratase (324 aa).

3 residues coordinate Zn(2+): Cys118, Cys120, and Cys128. Catalysis depends on Lys195, which acts as the Schiff-base intermediate with substrate. 5-aminolevulinate-binding residues include Arg205 and Arg217. Position 233 (Glu233) interacts with Mg(2+). Lys248 acts as the Schiff-base intermediate with substrate in catalysis. Ser274 and Tyr313 together coordinate 5-aminolevulinate.

It belongs to the ALAD family. In terms of assembly, homooctamer. The cofactor is Zn(2+).

It catalyses the reaction 2 5-aminolevulinate = porphobilinogen + 2 H2O + H(+). Its pathway is porphyrin-containing compound metabolism; protoporphyrin-IX biosynthesis; coproporphyrinogen-III from 5-aminolevulinate: step 1/4. Its function is as follows. Catalyzes an early step in the biosynthesis of tetrapyrroles. Binds two molecules of 5-aminolevulinate per subunit, each at a distinct site, and catalyzes their condensation to form porphobilinogen. This chain is Delta-aminolevulinic acid dehydratase (hemB), found in Staphylococcus epidermidis (strain ATCC 12228 / FDA PCI 1200).